A 300-amino-acid polypeptide reads, in one-letter code: Fluorinase (300 aa).

S-adenosyl-L-methionine contacts are provided by residues Asp16, 21 to 23 (DDS), Tyr77, Ser158, Asp211, Asn216, 270 to 271 (SR), and 278 to 280 (RNA).

The protein belongs to the SAM hydrolase / SAM-dependent halogenase family. Homohexamer.

It catalyses the reaction fluoride + S-adenosyl-L-methionine = 5'-deoxy-5'-fluoroadenosine + L-methionine. The catalysed reaction is chloride + S-adenosyl-L-methionine = 5'-chloro-5'-deoxyadenosine + L-methionine. With respect to regulation, activity is severely inhibited by 1 mM Cu(2+) or Zn(2+). Its function is as follows. Catalyzes the formation of a C-F bond by combining S-adenosyl-L-methionine (SAM) and fluoride to generate 5'-fluoro-5'-deoxyadenosine (5'-FDA) and L-methionine. Probably involved in fluoroacetate (FAc) and 4-fluorothreonine (4-FT) biosynthesis. In vitro, can also catalyze the conversion of chloride and SAM to 5'-chloro-5'-deoxyadenosine (5'-CIDA) and L-methionine in the presence of L-amino acid oxidase. The protein is Fluorinase of Nocardia brasiliensis (strain ATCC 700358 / HUJEG-1).